The following is a 194-amino-acid chain: Imidazoleglycerol-phosphate dehydratase (194 aa).

This sequence belongs to the imidazoleglycerol-phosphate dehydratase family.

It is found in the cytoplasm. It catalyses the reaction D-erythro-1-(imidazol-4-yl)glycerol 3-phosphate = 3-(imidazol-4-yl)-2-oxopropyl phosphate + H2O. It participates in amino-acid biosynthesis; L-histidine biosynthesis; L-histidine from 5-phospho-alpha-D-ribose 1-diphosphate: step 6/9. The chain is Imidazoleglycerol-phosphate dehydratase from Streptococcus thermophilus (strain ATCC BAA-491 / LMD-9).